The following is a 59-amino-acid chain: Large ribosomal subunit protein uL30 (59 aa).

This sequence belongs to the universal ribosomal protein uL30 family. Part of the 50S ribosomal subunit.

This Aliivibrio fischeri (strain MJ11) (Vibrio fischeri) protein is Large ribosomal subunit protein uL30.